Reading from the N-terminus, the 769-residue chain is Serine protease HtrA-like (769 aa).

The span at 1-20 (MDIGKKHVIPKSQYRRKRRE) shows a compositional bias: basic residues. Positions 1–390 (MDIGKKHVIP…ATSKLNKGRA (390 aa)) are disordered. Basic and acidic residues-rich tracts occupy residues 21–64 (FFHN…ERFK) and 71–108 (LEQR…DVSK). The span at 126–137 (YEQNSEATLSTK) shows a compositional bias: polar residues. Positions 138 to 186 (STDKVESSDMRKLSPDKNKVGHEEQHVLSKPSEHDKETRIDFESSRTDS) are enriched in basic and acidic residues. 2 stretches are compositionally biased toward polar residues: residues 202-221 (GNES…NTVP) and 247-262 (QQSQ…YGDS). The segment covering 264 to 295 (QNDKSNHENDLSHHTPSKSDDKDNVMREDHIV) has biased composition (basic and acidic residues). Residues 298–308 (NPDNDINTPSL) show a composition bias toward polar residues. The segment covering 310 to 330 (KIDDDRKLDEKIHVEDKHKQN) has biased composition (basic and acidic residues). The span at 331–347 (ADSSETVGYQSQSSVSH) shows a compositional bias: polar residues. Residues 348 to 362 (RSTEKRNMAINDHHK) show a composition bias toward basic and acidic residues. Positions 366-390 (QKLNTKTSANNNQKKATSKLNKGRA) are enriched in polar residues. Residues 410 to 430 (LVILMGIIILIVILNAIFNNV) form a helical membrane-spanning segment. Residues H504, D534, and S619 each act as charge relay system in the active site. Positions 680 to 733 (IASLNSFERQAVKLPGKVKNGVVVDQVDNNGLADQSSLKKGDVITELDGKLLED) constitute a PDZ domain.

Belongs to the peptidase S1C family.

The protein resides in the cell membrane. The protein is Serine protease HtrA-like of Staphylococcus aureus (strain bovine RF122 / ET3-1).